The primary structure comprises 202 residues: Small ribosomal subunit protein uS4 (202 aa).

The 63-residue stretch at 90-152 folds into the S4 RNA-binding domain; it reads MRLDNTVFRL…ERSRRLVETN (63 aa).

This sequence belongs to the universal ribosomal protein uS4 family. As to quaternary structure, part of the 30S ribosomal subunit. Contacts protein S5. The interaction surface between S4 and S5 is involved in control of translational fidelity.

Functionally, one of the primary rRNA binding proteins, it binds directly to 16S rRNA where it nucleates assembly of the body of the 30S subunit. With S5 and S12 plays an important role in translational accuracy. The protein is Small ribosomal subunit protein uS4 of Thermosynechococcus vestitus (strain NIES-2133 / IAM M-273 / BP-1).